The primary structure comprises 938 residues: MERYLPVSKKRNSSSSLEKITGSANGNGTLYSEEDTNLEENDFSWGDYLEETGTRAVPHVSFRHVEISIRSNFQPGMKLEVANKNNPDTYWVATIITTCGQLLLLRYCGYGEDRRADFWCDVIIADLHPVGWCTQNNKVLRPPDAIKDKYSDWTDFLIRELTGSRTAPANLLEGPLRGKGPIDLITVDSLIELQDSQNPFQYWIVSVTENVGGRLRLRYVGLEHTESYDRWLFYLDYRLRPIGWCQENKYRMDPPSDLYYLKLPFEWKCALEKALVLAAESPLPMEVFKDHADLQSHFFTVGMRLETLHISDPFHIYPASVTKVFNSKFFQVAIDDLRPEADKPTMLCHADSLGILPVQWCLKNGVNLAPPKGYSGQDFNWVDYHKQRQAEEAPHFCFKNAFSRGFSKNMKLEAVNPVNPGEVCVATVVSVKGRLLWLHLEGLETPMPDIIVDMDSMDIFPVGWCEANSYPLTTPYKASSKSKRKTVHFKMEKQLLSPVPIEKIPHELCLLPPQMDSPVGAINAKYCCPQLFVNHRCFSGPFLNKGRISELPQSVGPGMCVLVLKEILTLITNAAYKPGRVLRELQLVEDPEWNSQEEILKAKYGGKTYRAVVKIVRTADQVMNFCRQVCAKLECCPNLLSPVLISETCPENCSVHTKTRYTYYYGKRRRVIQSSLRVSNIETPPKSTRRRKRRKSVYVQKRRKSAIVVPAGVPAGVPAGVPEDIPAGIPEGIPASIPESIPEGIPESLPEAIPESIPKGSAQKTEQEKRETLDTARKKTGYHGPAYQTDTSAAQVPFARPRRAVTLRRNSEALKRPPVERARRVRTVPTTASSNNRVKGPLVRIVKPEDSSQSDEEKLILESNPLEWSVTDVVRFIKLTDCAPLARIFQEQDIDGQALLLLTLPTVQECMELKLGPAIKLCHQIERVKVAFYAQYAS.

A disordered region spans residues 1–32 (MERYLPVSKKRNSSSSLEKITGSANGNGTLYS). Residues 13–30 (SSSSLEKITGSANGNGTL) show a composition bias toward polar residues. MBT repeat units lie at residues 43–143 (FSWG…LRPP), 151–255 (SDWT…MDPP), 265–371 (FEWK…LAPP), and 379–475 (FNWV…LTTP). The interval 742–836 (PEGIPESLPE…TVPTTASSNN (95 aa)) is disordered. 2 stretches are compositionally biased toward basic and acidic residues: residues 765–777 (TEQE…DTAR) and 809–822 (RNSE…VERA). The 64-residue stretch at 868–931 (WSVTDVVRFI…CHQIERVKVA (64 aa)) folds into the SAM domain.

In terms of assembly, interacts with YY1. Interacts with methylated histones H3K9me2 and H4K20me2. In terms of tissue distribution, expressed in testis and, at much lower levels, in ovary.

Its subcellular location is the nucleus. Functionally, transcriptional repressor of HOXB13 gene. This Mus musculus (Mouse) protein is Scm-like with four MBT domains protein 2 (Sfmbt2).